The primary structure comprises 442 residues: D(2) dopamine receptor A (442 aa).

The Extracellular portion of the chain corresponds to 1–31 (MDPQNLSMYNDDINNGTNGTAVDQKPHYNYY). N-linked (GlcNAc...) asparagine glycans are attached at residues asparagine 5, asparagine 15, and asparagine 18. The helical transmembrane segment at 32–54 (AMLLTLLVFVIVFGNVLVCIAVS) threads the bilayer. At 55–64 (REKALQTTTN) the chain is on the cytoplasmic side. The chain crosses the membrane as a helical span at residues 65-87 (YLIVSLAVADLLVATLVMPWAVY). At 88–102 (MEVVGEWRFSRIHCD) the chain is on the extracellular side. Residues cysteine 101 and cysteine 176 are joined by a disulfide bond. Residues 103–124 (IFVTLDVMMCTASILNLCAISI) traverse the membrane as a helical segment. Residues 125 to 145 (DRYTAVAMPMLYNTRYSSKRR) are Cytoplasmic-facing. Residues 146-166 (VTVMISVVWVLSFAISCPLLF) traverse the membrane as a helical segment. At 167-182 (GLNNTGSKVCIIDNPA) the chain is on the extracellular side. The helical transmembrane segment at 183-207 (FVIYSSIVSFYVPFIVTLLVYVQIY) threads the bilayer. The Cytoplasmic portion of the chain corresponds to 208–372 (IVLRKRRKRV…SQHKEKKATQ (165 aa)). Residues 273–335 (DMEMEMMSST…KNGHPKDSTK (63 aa)) are disordered. The segment covering 304–318 (ATSNQCKNASLTSPV) has biased composition (polar residues). Basic and acidic residues predominate over residues 322 to 335 (YKAEKNGHPKDSTK). Residues 373–394 (MLAIVLGVFIICWLPFFIIHIL) traverse the membrane as a helical segment. The Extracellular portion of the chain corresponds to 395–408 (NMHCNCNIPQALYS). The cysteines at positions 398 and 400 are disulfide-linked. The chain crosses the membrane as a helical span at residues 409–430 (AFTWLGYVNSAVNPIIYTTFNV). Over 431 to 442 (EFRKAFIKILHC) the chain is Cytoplasmic. Residue cysteine 442 is the site of S-palmitoyl cysteine attachment.

Belongs to the G-protein coupled receptor 1 family. Palmitoylated. Palmitoylation is probably required for proper localization to the plasma membrane and stability of the receptor. In terms of tissue distribution, brain; pituitary.

Its subcellular location is the cell membrane. The protein resides in the golgi apparatus membrane. Its function is as follows. This is one of the five types (D1 to D5) of receptors for dopamine. The activity of this receptor is mediated by G proteins which inhibits adenylyl cyclase. In Xenopus D2R is involved in the regulation of the melanotrope cells of the intermediate pituitary during background adaptation of the animal. The protein is D(2) dopamine receptor A (drd2-a) of Xenopus laevis (African clawed frog).